The sequence spans 514 residues: Peptide chain release factor 3 (514 aa).

One can recognise a tr-type G domain in the interval 8-268 (KKRRTFAIIS…TFLKFAPEPH (261 aa)). Residues 17 to 24 (SHPDAGKT), 85 to 89 (DTPGH), and 139 to 142 (NKLD) contribute to the GTP site.

It belongs to the TRAFAC class translation factor GTPase superfamily. Classic translation factor GTPase family. PrfC subfamily.

It localises to the cytoplasm. Functionally, increases the formation of ribosomal termination complexes and stimulates activities of RF-1 and RF-2. It binds guanine nucleotides and has strong preference for UGA stop codons. It may interact directly with the ribosome. The stimulation of RF-1 and RF-2 is significantly reduced by GTP and GDP, but not by GMP. This is Peptide chain release factor 3 from Streptococcus pneumoniae (strain Hungary19A-6).